Consider the following 691-residue polypeptide: DNA ligase (691 aa).

NAD(+)-binding positions include 41-45 (DAEYD), 90-91 (SL), and Glu-130. Lys-132 serves as the catalytic N6-AMP-lysine intermediate. NAD(+) is bound by residues Arg-153, Glu-190, Lys-307, and Lys-331. Residues Cys-425, Cys-428, Cys-443, and Cys-449 each contribute to the Zn(2+) site. One can recognise a BRCT domain in the interval 610–691 (APQGVLAGKT…LHQLLEGNTP (82 aa)).

This sequence belongs to the NAD-dependent DNA ligase family. LigA subfamily. Mg(2+) is required as a cofactor. Mn(2+) serves as cofactor.

The enzyme catalyses NAD(+) + (deoxyribonucleotide)n-3'-hydroxyl + 5'-phospho-(deoxyribonucleotide)m = (deoxyribonucleotide)n+m + AMP + beta-nicotinamide D-nucleotide.. In terms of biological role, DNA ligase that catalyzes the formation of phosphodiester linkages between 5'-phosphoryl and 3'-hydroxyl groups in double-stranded DNA using NAD as a coenzyme and as the energy source for the reaction. It is essential for DNA replication and repair of damaged DNA. The protein is DNA ligase of Burkholderia lata (strain ATCC 17760 / DSM 23089 / LMG 22485 / NCIMB 9086 / R18194 / 383).